Here is a 195-residue protein sequence, read N- to C-terminus: Keratin-associated protein 4-3 (195 aa).

28 consecutive repeat copies span residues 34–38 (CCRTT), 39–43 (CCRPS), 44–48 (CCISS), 49–53 (CCRPS), 54–58 (CCISS), 59–63 (CCKPS), 64–68 (CCRTT), 69–73 (CCRPS), 74–78 (CCISS), 79–83 (CCRPS), 84–88 (CCISS), 89–93 (CCKPS), 94–98 (CCRTT), 99–103 (CCRPS), 104–108 (CCISS), 109–113 (CCRPS), 114–118 (CCISS), 119–123 (CCKPS), 124–128 (CCQTT), 129–133 (CCRPS), 134–138 (CCISS), 144–148 (CCQPS), 149–153 (CCRPA), 154–158 (CCISS), 159–163 (CCHPS), 164–168 (CCVSS), 179–183 (CCRTT), and 189–193 (CCGSS). Residues 34–193 (CCRTTCCRPS…CFHPICCGSS (160 aa)) are 29 X 5 AA repeats of C-C-[GIKRQVH]-[SPT]-[STA].

The protein belongs to the KRTAP type 4 family. In terms of assembly, interacts with hair keratins. As to expression, expressed specifically in the middle/uper portions of the hair cortex. Not detected in the hair matrix or cuticle.

In terms of biological role, in the hair cortex, hair keratin intermediate filaments are embedded in an interfilamentous matrix, consisting of hair keratin-associated proteins (KRTAP), which are essential for the formation of a rigid and resistant hair shaft through their extensive disulfide bond cross-linking with abundant cysteine residues of hair keratins. The matrix proteins include the high-sulfur and high-glycine-tyrosine keratins. This is Keratin-associated protein 4-3 (KRTAP4-3) from Homo sapiens (Human).